The primary structure comprises 231 residues: Cuticlin 2 (231 aa).

The signal sequence occupies residues 1 to 16 (MQKLIVFFTTIAAAQA). A run of 12 repeats spans residues 75 to 78 (AAPI), 79 to 82 (AAPA), 90 to 93 (AAPV), 105 to 108 (AAPI), 114 to 117 (AAPA), 121 to 124 (AAPV), 137 to 140 (AAPA), 153 to 156 (AAPA), 169 to 172 (AAPA), 192 to 195 (AAPA), 208 to 211 (AAPA), and 218 to 221 (AAPA). The interval 75-221 (AAPIAAPAGG…AGGYQAAAPA (147 aa)) is 12 X 4 AA repeats of A-A-P-[AVI].

Post-translationally, tyrosine residues can be cross-linked in vitro, leading to the formation of insoluble high molecular-weight complexes.

It localises to the secreted. Component of the insoluble part of the cuticles. This is Cuticlin 2 from Caenorhabditis elegans.